The primary structure comprises 443 residues: Eukaryotic translation initiation factor 3 subunit E (443 aa).

Residues 249–417 (LDLFFNAGFI…GTVVMNHPPS (169 aa)) enclose the PCI domain.

It belongs to the eIF-3 subunit E family. Component of the eukaryotic translation initiation factor 3 (eIF-3) complex.

It localises to the cytoplasm. Component of the eukaryotic translation initiation factor 3 (eIF-3) complex, which is involved in protein synthesis of a specialized repertoire of mRNAs and, together with other initiation factors, stimulates binding of mRNA and methionyl-tRNAi to the 40S ribosome. The eIF-3 complex specifically targets and initiates translation of a subset of mRNAs involved in cell proliferation. The chain is Eukaryotic translation initiation factor 3 subunit E (int-6) from Neurospora crassa (strain ATCC 24698 / 74-OR23-1A / CBS 708.71 / DSM 1257 / FGSC 987).